Consider the following 471-residue polypeptide: Ribulose bisphosphate carboxylase large chain (471 aa).

The residue at position 5 (lysine 5) is an N6,N6,N6-trimethyllysine. Substrate-binding residues include asparagine 114 and threonine 164. Lysine 166 (proton acceptor) is an active-site residue. Lysine 168 lines the substrate pocket. Residues lysine 192, aspartate 194, and glutamate 195 each contribute to the Mg(2+) site. The residue at position 192 (lysine 192) is an N6-carboxylysine. The Proton acceptor role is filled by histidine 285. Residues arginine 286, histidine 318, and serine 370 each coordinate substrate.

Belongs to the RuBisCO large chain family. Type I subfamily. Heterohexadecamer of 8 large chains and 8 small chains; disulfide-linked. The disulfide link is formed within the large subunit homodimers. Mg(2+) serves as cofactor. The disulfide bond which can form in the large chain dimeric partners within the hexadecamer appears to be associated with oxidative stress and protein turnover.

The protein resides in the plastid. It is found in the chloroplast. The catalysed reaction is 2 (2R)-3-phosphoglycerate + 2 H(+) = D-ribulose 1,5-bisphosphate + CO2 + H2O. It carries out the reaction D-ribulose 1,5-bisphosphate + O2 = 2-phosphoglycolate + (2R)-3-phosphoglycerate + 2 H(+). Functionally, ruBisCO catalyzes two reactions: the carboxylation of D-ribulose 1,5-bisphosphate, the primary event in carbon dioxide fixation, as well as the oxidative fragmentation of the pentose substrate in the photorespiration process. Both reactions occur simultaneously and in competition at the same active site. The chain is Ribulose bisphosphate carboxylase large chain from Schlumbergera truncata (Thanksgiving cactus).